The following is a 311-amino-acid chain: MPLLVEGRRVRLPQSAGDLVRAHPPLEERARLLRGQSVQQVGPQGLLYVQQRELAVTSPKDGSVCILGSDDATTCHIVVLRHTGNGATCLTHCDGTDTKAEVSLIMSSIKSFSDHTQRGRLEVHLVGGFSDDRQLSQKLTHQLLSEFDRQEDDIHLVTLCVTELNDREENENHFPIIYGIAVNVKTAEIYRASFPDRGPEEELRAARVLTGGPMISIYDAKTEQLRIGPYSWMPFPHVDFWLQQDDKQILENLSTSPLAEPPHFVEHIRSTLMFLKKYPSPTNTLFPGNKALLYKKNEDGLWKEISSGGET.

Monomer.

It is found in the cytoplasm. It carries out the reaction N-terminal L-asparaginyl-[protein] + H2O + H(+) = N-terminal L-aspartyl-[protein] + NH4(+). In terms of biological role, N-terminal asparagine deamidase that mediates deamidation of N-terminal asparagine residues to aspartate. Required for the ubiquitin-dependent turnover of intracellular proteins that initiate with Met-Asn. These proteins are acetylated on the retained initiator methionine and can subsequently be modified by the removal of N-acetyl methionine by acylaminoacid hydrolase (AAH). Conversion of the resulting N-terminal asparagine to aspartate by NTAN1/PNAD renders the protein susceptible to arginylation, polyubiquitination and degradation as specified by the N-end rule. This enzyme does not act on substrates with internal or C-terminal asparagines and does not act on glutamine residues in any position. The protein is Protein N-terminal asparagine amidohydrolase (NTAN1) of Sus scrofa (Pig).